The sequence spans 186 residues: Elongation factor P (186 aa).

Belongs to the elongation factor P family.

The protein localises to the cytoplasm. It functions in the pathway protein biosynthesis; polypeptide chain elongation. Functionally, involved in peptide bond synthesis. Stimulates efficient translation and peptide-bond synthesis on native or reconstituted 70S ribosomes in vitro. Probably functions indirectly by altering the affinity of the ribosome for aminoacyl-tRNA, thus increasing their reactivity as acceptors for peptidyl transferase. The chain is Elongation factor P from Polynucleobacter asymbioticus (strain DSM 18221 / CIP 109841 / QLW-P1DMWA-1) (Polynucleobacter necessarius subsp. asymbioticus).